Here is a 337-residue protein sequence, read N- to C-terminus: Glyceraldehyde-3-phosphate dehydrogenase, cytosolic (337 aa).

NAD(+)-binding positions include 13–14 (RI), Asp35, and Arg82. D-glyceraldehyde 3-phosphate is bound by residues 153 to 155 (SCT), Thr184, 213 to 214 (TG), and Arg236. The active-site Nucleophile is Cys154. NAD(+) is bound at residue Asn318.

It belongs to the glyceraldehyde-3-phosphate dehydrogenase family. In terms of assembly, homotetramer.

Its subcellular location is the cytoplasm. It catalyses the reaction D-glyceraldehyde 3-phosphate + phosphate + NAD(+) = (2R)-3-phospho-glyceroyl phosphate + NADH + H(+). The protein operates within carbohydrate degradation; glycolysis; pyruvate from D-glyceraldehyde 3-phosphate: step 1/5. Key enzyme in glycolysis that catalyzes the first step of the pathway by converting D-glyceraldehyde 3-phosphate (G3P) into 3-phospho-D-glyceroyl phosphate. Essential for the maintenance of cellular ATP levels and carbohydrate metabolism. The protein is Glyceraldehyde-3-phosphate dehydrogenase, cytosolic (GAPC) of Antirrhinum majus (Garden snapdragon).